The sequence spans 143 residues: Cold shock domain-containing protein CG9705 (143 aa).

Residues 1–30 (MTEPRTPEKLLAAKPPVLHHNSHSPNASLQ) are disordered. Phosphoserine is present on residues S22, S24, S28, and S33. Residues 54 to 121 (VVTGMVKSFS…KHQAVHVQIS (68 aa)) enclose the CSD domain. Phosphoserine occurs at positions 139 and 140.

In Drosophila melanogaster (Fruit fly), this protein is Cold shock domain-containing protein CG9705.